The following is a 744-amino-acid chain: MTFTFTALLCLGLTLGLWIPVLTGSLPKPILRVQPDSVVSMGTTVTFICEETIGAKQSYLYRNGNLQRRVPKNNQKPTNKTEFLFLNVGHQNAGQYHCSYKSQGKSSDYSEPLELVVTGAYSKPSLSAQTNPVVTSGGYVTLKCEPSHYGHTLILTVEGPQKLSWRQDPQCNYYTENCHVLFYVGPLTSNQRWIFRCYSYETNTPQVWSAPSEPVEILVSGKLQKPTIKAEPGSVIHSGKAMIIWCQGDLDAEIYFLHKEGSHNTQSTQTLQQPGNKAKLFIRPVTQGHAGDYRCYYYSSAGWSEPSDTLELVVTGIYNYHPLMLSGPPSPVVPEGGNVTLHCTSHRYYDKFILIKEDQKFSSSLDTKYISSTGQHQALFVMGPMTPNYSGTFRCYGYYKHTPQLWSEPSNLLKILITGQLHHVLFLSVMPNSTVHSGENVTLMCWSTYSVDTFILSKEGSGQPPLRLKSKIQDQQYQSEFSMSGVTSKLSGTYRCYGSHDSSLYLLSFASAPVELIVSGPIRTSDLPPTMSIPPDGLQRYLKALIGVSVAFLLFLFILIFILLRRRHQEKFRKDDEDAQKGKELQLSTGAAEPVTRDRGHQKRSNPAAATQEESLYASVEDMETKDGVELDTWKPPEGDPQGETYAQVEPSRLRRAGAISPVVSREQLNTKYEQAEEGQEVDSQATESEEPQDVTYAQLCSRTLRQGTAAPPLSQAGEAPEEPSVYAALATARPGAVPKNKKQ.

The N-terminal stretch at 1-24 is a signal peptide; the sequence is MTFTFTALLCLGLTLGLWIPVLTG. Over 25–543 the chain is Extracellular; the sequence is SLPKPILRVQ…PPDGLQRYLK (519 aa). Ig-like C2-type domains are found at residues 26 to 119, 121 to 221, 223 to 316, 320 to 419, and 426 to 520; these read LPKP…VVTG, YSKP…LVSG, LQKP…VVTG, YHPL…LITG, and FLSV…IVSG. Cystine bridges form between cysteine 49–cysteine 98, cysteine 144–cysteine 197, and cysteine 246–cysteine 295. N-linked (GlcNAc...) asparagine glycosylation is present at asparagine 79. A glycan (N-linked (GlcNAc...) asparagine) is linked at asparagine 338. A disulfide bond links cysteine 343 and cysteine 395. Asparagine 440 carries N-linked (GlcNAc...) asparagine glycosylation. Cysteine 445 and cysteine 496 form a disulfide bridge. A helical membrane pass occupies residues 544 to 564; sequence ALIGVSVAFLLFLFILIFILL. Residues 565-744 are Cytoplasmic-facing; the sequence is RRRHQEKFRK…PGAVPKNKKQ (180 aa). Over residues 572–584 the composition is skewed to basic and acidic residues; it reads FRKDDEDAQKGKE. Disordered regions lie at residues 572-617, 630-652, and 667-744; these read FRKD…ESLY, ELDT…VEPS, and EQLN…NKKQ. An ITIM motif 1 motif is present at residues 615–620; the sequence is SLYASV. 2 consecutive short sequence motifs (ITIM motif) follow at residues 695 to 700 and 725 to 730; these read VTYAQL and SVYAAL. Residues tyrosine 697 and tyrosine 727 each carry the phosphotyrosine; by LYN modification.

Interacts with LYN, PTPN6/SHP-1 and PTPN11/SHP-2. In terms of processing, phosphorylated on tyrosine residues by LYN. Phosphorylation at Tyr-697 and Tyr-727 is important for interaction with PTPN6/SHP-1 and PTPN11/SHP-2.

The protein resides in the cell membrane. In terms of biological role, may act as receptor for class I MHC antigens. Becomes activated upon coligation with immune receptors, such as FCGR2B and the B-cell receptor. Down-regulates antigen-induced B-cell activation by recruiting phosphatases to its immunoreceptor tyrosine-based inhibitor motifs (ITIM). The chain is Leukocyte immunoglobulin-like receptor subfamily B member 3A from Rattus norvegicus (Rat).